Reading from the N-terminus, the 153-residue chain is MSKTERPSRRAALLGDRPGSYAIARHVRMSASKCRRVINLVRGMDAVDAVTMLKFQPQAAAEPIRKVIASAMANAEQTEGLRADDLYISQAFVDEGITMRRIRPRAKGSASRILKRSAHITVVVEPKEARQARKKAKSGRPAAAAKSETEKGA.

The interval 125-153 is disordered; that stretch reads EPKEARQARKKAKSGRPAAAAKSETEKGA.

Belongs to the universal ribosomal protein uL22 family. In terms of assembly, part of the 50S ribosomal subunit.

This protein binds specifically to 23S rRNA; its binding is stimulated by other ribosomal proteins, e.g. L4, L17, and L20. It is important during the early stages of 50S assembly. It makes multiple contacts with different domains of the 23S rRNA in the assembled 50S subunit and ribosome. Functionally, the globular domain of the protein is located near the polypeptide exit tunnel on the outside of the subunit, while an extended beta-hairpin is found that lines the wall of the exit tunnel in the center of the 70S ribosome. The protein is Large ribosomal subunit protein uL22 of Cutibacterium acnes (strain DSM 16379 / KPA171202) (Propionibacterium acnes).